The primary structure comprises 203 residues: Outer-membrane lipoprotein LolB (203 aa).

Residues 1 to 18 (MYRLLCLLALLTAAGLMG) form the signal peptide. Cys19 carries the N-palmitoyl cysteine lipid modification. Cys19 is lipidated: S-diacylglycerol cysteine.

This sequence belongs to the LolB family. As to quaternary structure, monomer.

Its subcellular location is the cell outer membrane. Plays a critical role in the incorporation of lipoproteins in the outer membrane after they are released by the LolA protein. This is Outer-membrane lipoprotein LolB from Cellvibrio japonicus (strain Ueda107) (Pseudomonas fluorescens subsp. cellulosa).